A 1051-amino-acid polypeptide reads, in one-letter code: MNFKIKTFFSIKSNKIFYTDFYFFLKKKLIILIKNIFPEYFNFNNKYKNWNLICLYDLLYFKVNNINFLDNVQYINSLIKIFLPLKFQNLKTNKVFFKNLLIFELPKYNSYNYCYLNGLKKIFISKYFTSNGIFFNKYLKRKYNIYYAKLLLTNSNFFNIILDLKLKQIYLSIKNLKFNFILFLYYLGIKNTDILKYSRYKNSKILKLLIFSALQTDLVNNKKIILKNLNYLKSIFKLTILNKNYKNFIISKDKLNYNYGDFSKNNLLIIDFIFILDLLLDLQSKKLCFKTIDHLDNKHINTIGNYFQHNFKFYLKKFISIIPNLIKLQKFSLLKVYNFKELLILNPLIQYLEQINSFSELMHKYKLNNYNSFSKGILNLREICLNQLGKLCLIDTTEGINCGLVVSFAKHIRIYKKGIIQVYFSSIFKNKTKEFLNFKTSLDQELYLIQFNNINLRKIKYLMNVRLVYNKNNFRIKFFSNKKSILLEFTDLFSFTENLIPFIKYNDPARCLMGAKMQSQSVPLLNKKKSFVITGYEKEIITKSDTTIKALQEGIVLNASSLKIHIKDLFNREIVYYLSKYKKSNQNTIIHQKPLVWNGERVFTNQLLTQHQDIIDSEFAIGNNLLFYYGNFCGYDFEDAVIVSKRVLYQQLFSSLHMDIYEFNFCYNNENDIEFSTLEIPKQSYYIKKNLDSLGIIKEGEKILTGSILLTKIKVAKPTYTYKSIFKLIYSIFGKTIRNIKDNSLYIQTGKSGRVSKIELFLVNISSRHKYKTYNNSYLKCRIFICKQRFLTVGDKLCGRYGNKGILSYIAENADLPFLQNSFYPDIIVGALGIPSRMNLGQLFEALVGKISFSYNIRILPSFTTSSNLYFNYLKILIYNFLMFNNFKKGFNWLYNFNLPGKFIIRDGRTGVKLKSSVLCGVSRYSKLIHLIKDKLHFRTTGPYTEILQQPLKGKKNLGGQRFGEMEIWALEAFGASYNLKEILNYKSDDCFARNNLKEYLLFRNTELQNSTITESFRVILKEFNGLILNLELFLITDDLEENYLNLTINY.

The protein belongs to the RNA polymerase beta chain family. In terms of assembly, in plastids the minimal PEP RNA polymerase catalytic core is composed of four subunits: alpha, beta, beta', and beta''. When a (nuclear-encoded) sigma factor is associated with the core the holoenzyme is formed, which can initiate transcription (Potential).

It localises to the plastid. The protein resides in the apicoplast. The enzyme catalyses RNA(n) + a ribonucleoside 5'-triphosphate = RNA(n+1) + diphosphate. Its function is as follows. DNA-dependent RNA polymerase catalyzes the transcription of DNA into RNA using the four ribonucleoside triphosphates as substrates. The chain is DNA-directed RNA polymerase subunit beta (rpoB) from Toxoplasma gondii.